The primary structure comprises 331 residues: Ketol-acid reductoisomerase (NADP(+)) (331 aa).

One can recognise a KARI N-terminal Rossmann domain in the interval 1–182 (MATLYYDTDA…GGTRAGILET (182 aa)). Residues 25–28 (YGSQ), Ser51, Ser53, and 83–86 (DEFQ) each bind NADP(+). His108 is an active-site residue. Gly134 contacts NADP(+). The KARI C-terminal knotted domain occupies 183–328 (NFKEETETDL…KGLRAMFSWL (146 aa)). 4 residues coordinate Mg(2+): Asp191, Glu195, Glu227, and Glu231. Ser252 contributes to the substrate binding site.

Belongs to the ketol-acid reductoisomerase family. It depends on Mg(2+) as a cofactor.

It catalyses the reaction (2R)-2,3-dihydroxy-3-methylbutanoate + NADP(+) = (2S)-2-acetolactate + NADPH + H(+). It carries out the reaction (2R,3R)-2,3-dihydroxy-3-methylpentanoate + NADP(+) = (S)-2-ethyl-2-hydroxy-3-oxobutanoate + NADPH + H(+). The protein operates within amino-acid biosynthesis; L-isoleucine biosynthesis; L-isoleucine from 2-oxobutanoate: step 2/4. It functions in the pathway amino-acid biosynthesis; L-valine biosynthesis; L-valine from pyruvate: step 2/4. Involved in the biosynthesis of branched-chain amino acids (BCAA). Catalyzes an alkyl-migration followed by a ketol-acid reduction of (S)-2-acetolactate (S2AL) to yield (R)-2,3-dihydroxy-isovalerate. In the isomerase reaction, S2AL is rearranged via a Mg-dependent methyl migration to produce 3-hydroxy-3-methyl-2-ketobutyrate (HMKB). In the reductase reaction, this 2-ketoacid undergoes a metal-dependent reduction by NADPH to yield (R)-2,3-dihydroxy-isovalerate. The protein is Ketol-acid reductoisomerase (NADP(+)) of Synechococcus sp. (strain RCC307).